The sequence spans 248 residues: MWLGVITLFPEMFRAVTDFGVTGRAVKNGLLELHTWNPRDFTHDRHNTVDDRPYGGGPGMLMMVQPLRDAIHAAKAAAGEGAKVIYLSPQGRKLDQQGVTELAQSSRLILVCGRYEGIDERIIQTEVDEEWSIGDYVLSGGELPAMTLIDSVSRLVPGVLGKQASAEQDSFSDGLLDCPHYTRPESLDGVDVPAVLLSGNHEQIRLWRLQQSLGRTLLRRPELLQNLALTDEQTTLLAQFVEAMNKHA.

Residues glycine 113 and 133 to 138 (IGDYVL) each bind S-adenosyl-L-methionine.

Belongs to the RNA methyltransferase TrmD family. Homodimer.

It is found in the cytoplasm. The enzyme catalyses guanosine(37) in tRNA + S-adenosyl-L-methionine = N(1)-methylguanosine(37) in tRNA + S-adenosyl-L-homocysteine + H(+). Its function is as follows. Specifically methylates guanosine-37 in various tRNAs. The polypeptide is tRNA (guanine-N(1)-)-methyltransferase (Shewanella baltica (strain OS223)).